We begin with the raw amino-acid sequence, 120 residues long: Large ribosomal subunit protein bL19c (120 aa).

It belongs to the bacterial ribosomal protein bL19 family.

It is found in the plastid. Its subcellular location is the chloroplast. In Thalassiosira pseudonana (Marine diatom), this protein is Large ribosomal subunit protein bL19c.